The chain runs to 136 residues: Small ribosomal subunit protein uS9 (136 aa).

Belongs to the universal ribosomal protein uS9 family.

This is Small ribosomal subunit protein uS9 from Borrelia garinii subsp. bavariensis (strain ATCC BAA-2496 / DSM 23469 / PBi) (Borreliella bavariensis).